The primary structure comprises 209 residues: uncharacterized protein (209 aa).

This is an uncharacterized protein from Escherichia coli (strain K12).